Reading from the N-terminus, the 291-residue chain is Acetyl-coenzyme A carboxylase carboxyl transferase subunit beta (291 aa).

Residues 23-291 (VYTKDPVSGE…TPASASVAKS (269 aa)) enclose the CoA carboxyltransferase N-terminal domain.

The protein belongs to the AccD/PCCB family. As to quaternary structure, acetyl-CoA carboxylase is a heterohexamer composed of biotin carboxyl carrier protein (AccB), biotin carboxylase (AccC) and two subunits each of ACCase subunit alpha (AccA) and ACCase subunit beta (AccD).

Its subcellular location is the cytoplasm. It catalyses the reaction N(6)-carboxybiotinyl-L-lysyl-[protein] + acetyl-CoA = N(6)-biotinyl-L-lysyl-[protein] + malonyl-CoA. Its pathway is lipid metabolism; malonyl-CoA biosynthesis; malonyl-CoA from acetyl-CoA: step 1/1. Its function is as follows. Component of the acetyl coenzyme A carboxylase (ACC) complex. Biotin carboxylase (BC) catalyzes the carboxylation of biotin on its carrier protein (BCCP) and then the CO(2) group is transferred by the transcarboxylase to acetyl-CoA to form malonyl-CoA. The protein is Acetyl-coenzyme A carboxylase carboxyl transferase subunit beta of Opitutus terrae (strain DSM 11246 / JCM 15787 / PB90-1).